Consider the following 325-residue polypeptide: Eukaryotic translation initiation factor 3 subunit I (325 aa).

WD repeat units lie at residues 1 to 39, 43 to 81, 87 to 127, 135 to 175, and 180 to 217; these read MKPI…VWYS, ERLG…LWDC, LALL…FFDL, NNEP…QYSA, and VLVN…LFDS. Threonine 219 bears the Phosphothreonine mark. WD repeat units follow at residues 221–267 and 275–316; these read EHQK…KFEA and EEEF…YFDP. Lysine 264 carries the N6-acetyllysine modification. Lysine 282 participates in a covalent cross-link: Glycyl lysine isopeptide (Lys-Gly) (interchain with G-Cter in ubiquitin). The residue at position 308 (tyrosine 308) is a Phosphotyrosine.

In terms of assembly, component of the eukaryotic translation initiation factor 3 (eIF-3) complex, which is composed of 13 subunits: EIF3A, EIF3B, EIF3C, EIF3D, EIF3E, EIF3F, EIF3G, EIF3H, EIF3I, EIF3J, EIF3K, EIF3L and EIF3M. The eIF-3 complex appears to include 3 stable modules: module A is composed of EIF3A, EIF3B, EIF3G and EIF3I; module B is composed of EIF3F, EIF3H, and EIF3M; and module C is composed of EIF3C, EIF3D, EIF3E, EIF3K and EIF3L. EIF3C of module C binds EIF3B of module A and EIF3H of module B, thereby linking the three modules. EIF3J is a labile subunit that binds to the eIF-3 complex via EIF3B. The eIF-3 complex interacts with RPS6KB1 under conditions of nutrient depletion. Mitogenic stimulation leads to binding and activation of a complex composed of MTOR and RPTOR, leading to phosphorylation and release of RPS6KB1 and binding of EIF4B to eIF-3. In terms of processing, phosphorylated by TGF-beta type II receptor.

It is found in the cytoplasm. Functionally, component of the eukaryotic translation initiation factor 3 (eIF-3) complex, which is required for several steps in the initiation of protein synthesis. The eIF-3 complex associates with the 40S ribosome and facilitates the recruitment of eIF-1, eIF-1A, eIF-2:GTP:methionyl-tRNAi and eIF-5 to form the 43S pre-initiation complex (43S PIC). The eIF-3 complex stimulates mRNA recruitment to the 43S PIC and scanning of the mRNA for AUG recognition. The eIF-3 complex is also required for disassembly and recycling of post-termination ribosomal complexes and subsequently prevents premature joining of the 40S and 60S ribosomal subunits prior to initiation. The eIF-3 complex specifically targets and initiates translation of a subset of mRNAs involved in cell proliferation, including cell cycling, differentiation and apoptosis, and uses different modes of RNA stem-loop binding to exert either translational activation or repression. The protein is Eukaryotic translation initiation factor 3 subunit I of Homo sapiens (Human).